We begin with the raw amino-acid sequence, 158 residues long: Large ribosomal subunit protein bL19 (158 aa).

Residues 119–129 are compositionally biased toward basic and acidic residues; sequence SDRSRVMKDAA. The segment at 119–158 is disordered; that stretch reads SDRSRVMKDAARAQQARDAAQGNSSSETQSSTAAVETQGE. Over residues 130-139 the composition is skewed to low complexity; sequence RAQQARDAAQ. Residues 140-158 show a composition bias toward polar residues; the sequence is GNSSSETQSSTAAVETQGE.

Belongs to the bacterial ribosomal protein bL19 family.

In terms of biological role, this protein is located at the 30S-50S ribosomal subunit interface and may play a role in the structure and function of the aminoacyl-tRNA binding site. This Deinococcus geothermalis (strain DSM 11300 / CIP 105573 / AG-3a) protein is Large ribosomal subunit protein bL19.